Here is a 444-residue protein sequence, read N- to C-terminus: Glutamyl-tRNA reductase (444 aa).

Substrate-binding positions include 41 to 44 (TCNR), Ser102, 107 to 109 (ERE), and Gln113. Cys42 (nucleophile) is an active-site residue. 181–186 (GTGSYA) contributes to the NADP(+) binding site.

This sequence belongs to the glutamyl-tRNA reductase family. As to quaternary structure, homodimer.

The enzyme catalyses (S)-4-amino-5-oxopentanoate + tRNA(Glu) + NADP(+) = L-glutamyl-tRNA(Glu) + NADPH + H(+). It participates in porphyrin-containing compound metabolism; protoporphyrin-IX biosynthesis; 5-aminolevulinate from L-glutamyl-tRNA(Glu): step 1/2. In terms of biological role, catalyzes the NADPH-dependent reduction of glutamyl-tRNA(Glu) to glutamate 1-semialdehyde (GSA). The protein is Glutamyl-tRNA reductase of Cutibacterium acnes (strain DSM 16379 / KPA171202) (Propionibacterium acnes).